A 91-amino-acid chain; its full sequence is UPF0250 protein BB0170 (91 aa).

The protein belongs to the UPF0250 family.

The protein is UPF0250 protein BB0170 of Bordetella bronchiseptica (strain ATCC BAA-588 / NCTC 13252 / RB50) (Alcaligenes bronchisepticus).